A 550-amino-acid polypeptide reads, in one-letter code: Hydroxylamine reductase (550 aa).

4 residues coordinate [2Fe-2S] cluster: Cys-3, Cys-6, Cys-18, and Cys-25. His-249, Glu-273, Cys-317, Cys-405, Cys-433, Cys-458, Glu-492, and Lys-494 together coordinate hybrid [4Fe-2O-2S] cluster. Residue Cys-405 is modified to Cysteine persulfide.

Belongs to the HCP family. Requires [2Fe-2S] cluster as cofactor. Hybrid [4Fe-2O-2S] cluster serves as cofactor.

It localises to the cytoplasm. The enzyme catalyses A + NH4(+) + H2O = hydroxylamine + AH2 + H(+). Catalyzes the reduction of hydroxylamine to form NH(3) and H(2)O. The protein is Hydroxylamine reductase of Escherichia coli O139:H28 (strain E24377A / ETEC).